The following is a 339-amino-acid chain: Heat stress transcription factor C-1a (339 aa).

Positions 154–217 (EEEDAAEDVL…LAKLADDPNA (64 aa)) form a coiled coil. The tract at residues 176-212 (LRHEQTAIGEELARMSQRLQATERRPDQLMSFLAKLA) is hydrophobic repeat HR-A/B. The tract at residues 227–248 (AERKRRRQHLPSHEPTVCPLPP) is disordered. A Nuclear localization signal motif is present at residues 229 to 233 (RKRRR).

This sequence belongs to the HSF family. Class C subfamily. In terms of assembly, homotrimer. In terms of processing, exhibits temperature-dependent phosphorylation.

It localises to the nucleus. Its function is as follows. Transcriptional regulator that specifically binds DNA of heat shock promoter elements (HSE). In Oryza sativa subsp. japonica (Rice), this protein is Heat stress transcription factor C-1a (HSFC1A).